A 59-amino-acid chain; its full sequence is Venom protein 37.1 (59 aa).

The first 18 residues, 1 to 18 (MVSTLMIASVKLRLYCTA), serve as a signal peptide directing secretion.

It belongs to the non-disulfide-bridged peptide (NDBP) superfamily. Long chain multifunctional peptide (group 2) family. As to expression, expressed by the venom gland.

It localises to the secreted. In Lychas mucronatus (Chinese swimming scorpion), this protein is Venom protein 37.1.